The following is a 260-amino-acid chain: Alpha-acetolactate decarboxylase (260 aa).

This sequence belongs to the alpha-acetolactate decarboxylase family.

It carries out the reaction (2S)-2-acetolactate + H(+) = (R)-acetoin + CO2. It functions in the pathway polyol metabolism; (R,R)-butane-2,3-diol biosynthesis; (R,R)-butane-2,3-diol from pyruvate: step 2/3. Its function is as follows. Converts acetolactate into acetoin, which can be excreted by the cells. This may be a mechanism for controlling the internal pH of cells in the stationary stage. This is Alpha-acetolactate decarboxylase (budA) from Klebsiella aerogenes (Enterobacter aerogenes).